We begin with the raw amino-acid sequence, 278 residues long: 4-deoxy-L-threo-5-hexosulose-uronate ketol-isomerase (278 aa).

Residues histidine 196, histidine 198, glutamate 203, and histidine 245 each coordinate Zn(2+).

Belongs to the KduI family. It depends on Zn(2+) as a cofactor.

It carries out the reaction 5-dehydro-4-deoxy-D-glucuronate = 3-deoxy-D-glycero-2,5-hexodiulosonate. It participates in glycan metabolism; pectin degradation; 2-dehydro-3-deoxy-D-gluconate from pectin: step 4/5. In terms of biological role, catalyzes the isomerization of 5-dehydro-4-deoxy-D-glucuronate to 3-deoxy-D-glycero-2,5-hexodiulosonate. This Shigella sonnei (strain Ss046) protein is 4-deoxy-L-threo-5-hexosulose-uronate ketol-isomerase.